The primary structure comprises 633 residues: tRNA uridine 5-carboxymethylaminomethyl modification enzyme MnmG (633 aa).

FAD is bound by residues 15-20 (GAGHAG), Val-127, and Ser-182. 276-290 (GPRYCPSIEDKIVRF) contacts NAD(+). Gln-373 provides a ligand contact to FAD.

Belongs to the MnmG family. As to quaternary structure, homodimer. Heterotetramer of two MnmE and two MnmG subunits. Requires FAD as cofactor.

The protein resides in the cytoplasm. NAD-binding protein involved in the addition of a carboxymethylaminomethyl (cmnm) group at the wobble position (U34) of certain tRNAs, forming tRNA-cmnm(5)s(2)U34. In Streptococcus thermophilus (strain CNRZ 1066), this protein is tRNA uridine 5-carboxymethylaminomethyl modification enzyme MnmG.